Here is a 364-residue protein sequence, read N- to C-terminus: Dimethylsulfoniopropionate demethylase DmdA (364 aa).

Belongs to the GcvT family. DmdA subfamily.

It catalyses the reaction S,S-dimethyl-beta-propiothetin + (6S)-5,6,7,8-tetrahydrofolate = 3-(methylsulfanyl)propanoate + (6S)-5-methyl-5,6,7,8-tetrahydrofolate + H(+). Involved in the assimilation of dimethylsulphoniopropionate (DMSP), an important compound in the fixation of carbon in marine phytoplankton, by mediating demethylation of dimethylsulfoniopropionate (DMSP) to methyl-mercaptopropionate (MMPA). The intracellular concentration of DMSP is estimated to be 70 mM. The chain is Dimethylsulfoniopropionate demethylase DmdA from Ruegeria pomeroyi (strain ATCC 700808 / DSM 15171 / DSS-3) (Silicibacter pomeroyi).